The sequence spans 483 residues: Regulatory protein ViaA (483 aa).

Belongs to the ViaA family. In terms of assembly, homodimer. Interacts with RavA.

It is found in the cytoplasm. Component of the RavA-ViaA chaperone complex, which may act on the membrane to optimize the function of some of the respiratory chains. ViaA stimulates the ATPase activity of RavA. The protein is Regulatory protein ViaA of Salmonella typhi.